Reading from the N-terminus, the 225-residue chain is UPF0758 protein BAV2405 (225 aa).

In terms of domain architecture, MPN spans 103 to 225 (AMKHPEEVRR…ALSMAERGLI (123 aa)). Residues histidine 174, histidine 176, and aspartate 187 each coordinate Zn(2+). Positions 174 to 187 (HNHPSGNPQPSAAD) match the JAMM motif motif.

This sequence belongs to the UPF0758 family.

This chain is UPF0758 protein BAV2405, found in Bordetella avium (strain 197N).